The sequence spans 332 residues: Torsin-1A (332 aa).

The first 20 residues, 1–20 (MKLGRAVLGLLLLAPSVVQA), serve as a signal peptide directing secretion. Residues 91–251 (KPKKPLTLSL…VSVFNNKNSG (161 aa)) form an interaction with SNAPIN region. 102 to 109 (GWTGTGKN) provides a ligand contact to ATP. N-linked (GlcNAc...) (high mannose) asparagine glycosylation is found at asparagine 143 and asparagine 158. An interaction with KLC1 region spans residues 251–332 (GFWHSSLIDR…FTKLDYYYDD (82 aa)). The interaction with SYNE3 stretch occupies residues 312-332 (RVFSDKGCKTVFTKLDYYYDD).

Belongs to the ClpA/ClpB family. Torsin subfamily. Homohexamer. Interacts with TOR1B; the interaction may be specific of neural tissues. Interacts (ATP-bound) with TOR1AIP1 and TOR1AIP2; the interactions induce ATPase activity. Interacts with KLHL14; preferentially when ATP-free. Interacts with KLC1 (via TPR repeats); the interaction associates TOR1A with the kinesin oligomeric complex. Interacts with COPS4; the interaction associates TOR1A with the CSN complex. Interacts with SNAPIN; the interaction is direct and associates SNAPIN with the CSN complex. Interacts with STON2. Interacts (ATP-bound) with SYNE3 (via KASH domain); the interaction is required for SYNE3 nuclear envelope localization. Interacts with VIM; the interaction associates TOR1A with the cytoskeleton. Interacts with PLEC. Interacts (ATP-bound) with SLC6A3; regulates SLC6A3 transport to the plasma membrane. Post-translationally, N-glycosylated. As to expression, widely expressed. Highest levels in kidney and liver. In the brain, high levels found in the dopaminergic neurons of the substantia nigra pars compacta, as well as in the neocortex, hippocampus and cerebellum. Also highly expressed in the spinal cord.

The protein resides in the endoplasmic reticulum lumen. It is found in the nucleus membrane. Its subcellular location is the cell projection. It localises to the growth cone. The protein localises to the cytoplasmic vesicle membrane. The protein resides in the cytoplasmic vesicle. It is found in the secretory vesicle. Its subcellular location is the synaptic vesicle. It localises to the cytoplasm. The protein localises to the cytoskeleton. It carries out the reaction ATP + H2O = ADP + phosphate + H(+). Protein with chaperone functions important for the control of protein folding, processing, stability and localization as well as for the reduction of misfolded protein aggregates. Involved in the regulation of synaptic vesicle recycling, controls STON2 protein stability in collaboration with the COP9 signalosome complex (CSN). In the nucleus, may link the cytoskeleton with the nuclear envelope, this mechanism seems to be crucial for the control of nuclear polarity, cell movement and, specifically in neurons, nuclear envelope integrity. Participates in the cellular trafficking and may regulate the subcellular location of multipass membrane proteins such as the dopamine transporter SLC6A3, leading to the modulation of dopamine neurotransmission. In the endoplasmic reticulum, plays a role in the quality control of protein folding by increasing clearance of misfolded proteins such as SGCE variants or holding them in an intermediate state for proper refolding. May have a redundant function with TOR1B in non-neural tissues. This chain is Torsin-1A (TOR1A), found in Homo sapiens (Human).